The primary structure comprises 2170 residues: Brefeldin A-inhibited guanine nucleotide-exchange protein 3 (2170 aa).

Residue Ser471 is modified to Phosphoserine. Disordered stretches follow at residues 489-547 (EHTP…MGKV) and 613-634 (AAEKDSGRSDVSDIGSDNCSLA). Over residues 503–524 (ISISVTTDTGQTTLEGELGQTT) the composition is skewed to polar residues. An SEC7 domain is found at 579–792 (RTRSYGSRYS…EELYHQVLDR (214 aa)). A compositionally biased stretch (basic and acidic residues) spans 614 to 623 (AEKDSGRSDV). Ser628, Ser632, and Ser1045 each carry phosphoserine. Residues 1488–1508 (PGFGIYAVVHLLLPVMSLWLL) form a helical membrane-spanning segment. Residues 1843–1872 (SSDSSQQCSSEDEDIFEETAQVSPPRGKEK) are disordered. Ser1881 carries the post-translational modification Phosphoserine. Residues 1938–1955 (FQSESSTPSTGGFSGKNT) are compositionally biased toward polar residues. 2 disordered regions span residues 1938–1997 (FQSE…RKKE) and 2024–2058 (KRRQPHNLPPFPKEVKVDKKGEPLGPRGPDSPLLQ). Over residues 1956–1966 (PSEDDRREHLS) the composition is skewed to basic and acidic residues. Phosphoserine is present on residues Ser1975 and Ser1984. Basic and acidic residues-rich tracts occupy residues 1986–1997 (KTEKKDPGRKKE) and 2036–2045 (KEVKVDKKGE). Ser2072, Ser2074, Ser2088, Ser2094, and Ser2096 each carry phosphoserine. The disordered stretch occupies residues 2078–2097 (ELLRQEKRPRSGSTGSSLSV). A compositionally biased stretch (low complexity) spans 2088-2097 (SGSTGSSLSV).

In terms of assembly, interacts with PHB2. In terms of tissue distribution, expressed in pancreatic islet (insulin granules of islet alpha and beta cells) and brain (at protein level).

It is found in the cytoplasmic vesicle. It localises to the secretory vesicle. The protein resides in the secretory vesicle membrane. Functionally, participates in the regulation of systemic glucose homeostasis, where it negatively regulates insulin granule biogenesis in pancreatic islet beta cells. Also regulates glucagon granule production in pancreatic alpha cells. Inhibits nuclear translocation of the transcriptional coregulator PHB2 and may enhance estrogen receptor alpha (ESR1) transcriptional activity in breast cancer cells. This is Brefeldin A-inhibited guanine nucleotide-exchange protein 3 from Mus musculus (Mouse).